The primary structure comprises 475 residues: Splicing factor U2AF 65 kDa subunit (475 aa).

The disordered stretch occupies residues 1 to 90; the sequence is MSDFDEFERQ…RHEKKKKVRK (90 aa). Serine 2 carries the N-acetylserine modification. Serine 2 bears the Phosphoserine mark. Residues 2-93 form a required for interaction with PRPF19 region; sequence SDFDEFERQL…KKKKVRKYWD (92 aa). The span at 7 to 22 shows a compositional bias: basic and acidic residues; it reads FERQLNENKQERDKEN. Lysine 15 is subject to 5-hydroxylysine; by JMJD6; alternate. Lysine 15 participates in a covalent cross-link: Glycyl lysine isopeptide (Lys-Gly) (interchain with G-Cter in SUMO2); alternate. Positions 17 to 47 are necessary and sufficient to stimulate pre-mRNAs 3'-end cleavage in a CFIm complex-dependent manner; that stretch reads ERDKENRHRKRSHSRSRSRDRKRRSRSRDRR. The segment covering 23–46 has biased composition (basic residues); sequence RHRKRSHSRSRSRDRKRRSRSRDR. Over residues 47–56 the composition is skewed to basic and acidic residues; that stretch reads RNRDQRSASR. Lysine 70 participates in a covalent cross-link: Glycyl lysine isopeptide (Lys-Gly) (interchain with G-Cter in SUMO2); alternate. Lysine 70 is subject to N6-acetyllysine; alternate. At serine 79 the chain carries Phosphoserine. Over residues 79–89 the composition is skewed to basic residues; sequence SPRHEKKKKVR. RRM domains lie at 149-231, 259-337, and 385-466; these read RRLY…RPHD, HKLF…RASV, and LPEE…YCDP. Lysine 276 carries the post-translational modification 5-hydroxylysine; by JMJD6. Serine 294 is modified (phosphoserine).

Belongs to the splicing factor SR family. Interacts with U2AF1L4. Heterodimer with U2AF1. Binds unphosphorylated SF1. Interacts with SCAF11 and SNW1. Interacts with ZRSR2/U2AF1-RS2. Interacts with RBM17. Interacts with PRPF19; the interaction is direct. Interacts with POLR2A (via the C-terminal domain); Interacts with PRPF19; the interaction is direct. Interacts with POLR2A (via the C-terminal domain); recruits PRPF19 and the Prp19 complex to the pre-mRNA. Interacts with KHDC4 (Isoform 2). Interacts with ZRSR2. Interacts with the SF3B complex composed of SF3B1, SF3B2, SF3B3, SF3B4, SF3B5, SF3B6 and PHF5A. Interacts (via N-terminus) with CPSF7 (via C-terminus); this interaction stimulates pre-mRNA 3'-end processing by promoting the recruitment of the CFIm complex to cleavage and polyadenylation signals. Interacts with ARGLU1; interaction may be involved in ARGLU1-mediated modulation of alternative splicing. Post-translationally, lysyl-hydroxylation at Lys-15 and Lys-276 affects the mRNA splicing activity of the protein, leading to regulate some, but not all, alternative splicing events.

It localises to the nucleus. Functionally, plays a role in pre-mRNA splicing and 3'-end processing. By recruiting PRPF19 and the PRP19C/Prp19 complex/NTC/Nineteen complex to the RNA polymerase II C-terminal domain (CTD), and thereby pre-mRNA, may couple transcription to splicing. Required for the export of mRNA out of the nucleus, even if the mRNA is encoded by an intron-less gene. Positively regulates pre-mRNA 3'-end processing by recruiting the CFIm complex to cleavage and polyadenylation signals. The polypeptide is Splicing factor U2AF 65 kDa subunit (U2af2) (Mus musculus (Mouse)).